Here is a 160-residue protein sequence, read N- to C-terminus: ATP synthase subunit b (160 aa).

A helical membrane pass occupies residues 12–32 (ISFVLFVWFCMKYVWYPFISI).

It belongs to the ATPase B chain family. F-type ATPases have 2 components, F(1) - the catalytic core - and F(0) - the membrane proton channel. F(1) has five subunits: alpha(3), beta(3), gamma(1), delta(1), epsilon(1). F(0) has three main subunits: a(1), b(2) and c(10-14). The alpha and beta chains form an alternating ring which encloses part of the gamma chain. F(1) is attached to F(0) by a central stalk formed by the gamma and epsilon chains, while a peripheral stalk is formed by the delta and b chains.

The protein resides in the cell inner membrane. In terms of biological role, f(1)F(0) ATP synthase produces ATP from ADP in the presence of a proton or sodium gradient. F-type ATPases consist of two structural domains, F(1) containing the extramembraneous catalytic core and F(0) containing the membrane proton channel, linked together by a central stalk and a peripheral stalk. During catalysis, ATP synthesis in the catalytic domain of F(1) is coupled via a rotary mechanism of the central stalk subunits to proton translocation. Its function is as follows. Component of the F(0) channel, it forms part of the peripheral stalk, linking F(1) to F(0). The polypeptide is ATP synthase subunit b (Blochmanniella pennsylvanica (strain BPEN)).